Consider the following 499-residue polypeptide: Protein NODULATION SIGNALING PATHWAY 2 (499 aa).

Positions 64–106 are disordered; that stretch reads NNTGPAFSDHTASTTSEEEEEEEATTTTMTTTTTTTTTTPEAA. Residues 88–104 are compositionally biased toward low complexity; sequence TTTTMTTTTTTTTTTPE. Residues 106-491 form the GRAS domain; it reads ADDDFKGLRL…RRLLSASLWT (386 aa). The tract at residues 113–182 is leucine repeat I (LRI); the sequence is LRLVHLLMAG…AGGAYNSSSK (70 aa). Residues 201–265 form a VHIID region; sequence FQLLQDMSPY…PNGPHLRITA (65 aa). The VHIID signature appears at 232–236; that stretch reads VHIVD. The tract at residues 281–313 is leucine repeat II (LRII); it reads ETGRRLTAFATSLGQPFSFHHSRLESDETFRPA. Residues 323–414 form a PFYRE region; that stretch reads LVFNCMLNLP…RVFLGPRIVG (92 aa). Positions 417 to 491 are SAW; the sequence is ARIYRTGGGG…RRLLSASLWT (75 aa).

It belongs to the GRAS family. Interacts with IPN2. Binds to RAD1. Interacts with RAM1. As to expression, highly expressed in roots.

It is found in the nucleus membrane. The protein resides in the endoplasmic reticulum. Transcriptional regulator essential for Nod-factor-induced gene expression. Acts downstream of calcium spiking and a calcium/calmodulin-dependent protein kinase required for activation of early nodulation gene expression. Transcription factor involved in the induction of NIN and ENOD40 genes, which are required for rhizobial infection and early nodule development. Does not seem to contribute to the early steps of the arbuscular mycorrhizal fungus infection and colonization processes in roots. Transcription factor involved in the positive regulation of the beta-carotene isomerase D27, which participates in a pathway leading to biosynthesis of strigolactones in roots. The protein is Protein NODULATION SIGNALING PATHWAY 2 of Lotus japonicus (Lotus corniculatus var. japonicus).